Here is a 585-residue protein sequence, read N- to C-terminus: Arginine--tRNA ligase (585 aa).

The 'HIGH' region signature appears at 127 to 137; the sequence is PNTNKPLHVGH.

It belongs to the class-I aminoacyl-tRNA synthetase family. In terms of assembly, monomer.

The protein resides in the cytoplasm. It catalyses the reaction tRNA(Arg) + L-arginine + ATP = L-arginyl-tRNA(Arg) + AMP + diphosphate. The chain is Arginine--tRNA ligase (argS) from Borreliella burgdorferi (strain ATCC 35210 / DSM 4680 / CIP 102532 / B31) (Borrelia burgdorferi).